The sequence spans 273 residues: Large ribosomal subunit protein uL2 (273 aa).

Disordered regions lie at residues 34–54 (LEKK…TRHI) and 223–273 (VAMN…RRRK).

It belongs to the universal ribosomal protein uL2 family. As to quaternary structure, part of the 50S ribosomal subunit. Forms a bridge to the 30S subunit in the 70S ribosome.

One of the primary rRNA binding proteins. Required for association of the 30S and 50S subunits to form the 70S ribosome, for tRNA binding and peptide bond formation. It has been suggested to have peptidyltransferase activity; this is somewhat controversial. Makes several contacts with the 16S rRNA in the 70S ribosome. The polypeptide is Large ribosomal subunit protein uL2 (Azotobacter vinelandii (strain DJ / ATCC BAA-1303)).